A 180-amino-acid polypeptide reads, in one-letter code: Interleukin-17B (180 aa).

The N-terminal stretch at 1 to 22 (MDWPHSLLFLLAISIFLAPSHP) is a signal peptide. Positions 22-44 (PRNTKGKRKGQGRPSPLAPGPHQ) are disordered. Residues 23-32 (RNTKGKRKGQ) are compositionally biased toward basic residues. N-linked (GlcNAc...) asparagine glycosylation occurs at asparagine 75. 2 cysteine pairs are disulfide-bonded: cysteine 121-cysteine 176 and cysteine 126-cysteine 178.

It belongs to the IL-17 family.

It localises to the secreted. In terms of biological role, stimulates the release of tumor necrosis factor alpha and IL-1-beta from the monocytic cell line THP-1. The chain is Interleukin-17B (Il17b) from Mus musculus (Mouse).